An 89-amino-acid chain; its full sequence is Small ribosomal subunit protein uS17 (89 aa).

It belongs to the universal ribosomal protein uS17 family. As to quaternary structure, part of the 30S ribosomal subunit.

Functionally, one of the primary rRNA binding proteins, it binds specifically to the 5'-end of 16S ribosomal RNA. The polypeptide is Small ribosomal subunit protein uS17 (Chlorobium phaeobacteroides (strain BS1)).